The primary structure comprises 158 residues: 6,7-dimethyl-8-ribityllumazine synthase (158 aa).

Residues Phe24, 58 to 60, and 82 to 84 each bind 5-amino-6-(D-ribitylamino)uracil; these read AFE and AVI. A (2S)-2-hydroxy-3-oxobutyl phosphate-binding site is contributed by 87-88; that stretch reads GT. The active-site Proton donor is His90. Phe115 lines the 5-amino-6-(D-ribitylamino)uracil pocket. A (2S)-2-hydroxy-3-oxobutyl phosphate-binding site is contributed by Arg129.

This sequence belongs to the DMRL synthase family. Forms an icosahedral capsid composed of 60 subunits, arranged as a dodecamer of pentamers.

The enzyme catalyses (2S)-2-hydroxy-3-oxobutyl phosphate + 5-amino-6-(D-ribitylamino)uracil = 6,7-dimethyl-8-(1-D-ribityl)lumazine + phosphate + 2 H2O + H(+). The protein operates within cofactor biosynthesis; riboflavin biosynthesis; riboflavin from 2-hydroxy-3-oxobutyl phosphate and 5-amino-6-(D-ribitylamino)uracil: step 1/2. Functionally, catalyzes the formation of 6,7-dimethyl-8-ribityllumazine by condensation of 5-amino-6-(D-ribitylamino)uracil with 3,4-dihydroxy-2-butanone 4-phosphate. This is the penultimate step in the biosynthesis of riboflavin. This chain is 6,7-dimethyl-8-ribityllumazine synthase, found in Stutzerimonas stutzeri (strain A1501) (Pseudomonas stutzeri).